Reading from the N-terminus, the 114-residue chain is uncharacterized protein (114 aa).

To M.jannaschii MJ0310 and MJ0714.

This is an uncharacterized protein from Methanocaldococcus jannaschii (strain ATCC 43067 / DSM 2661 / JAL-1 / JCM 10045 / NBRC 100440) (Methanococcus jannaschii).